Consider the following 451-residue polypeptide: Tubulin alpha chain (451 aa).

Residue Gln11 participates in GTP binding. The residue at position 40 (Lys40) is an N6-acetyllysine. Residues Glu71, Gly144, Thr145, Thr179, Asn206, and Asn228 each contribute to the GTP site. Glu71 contacts Mg(2+). The active site involves Glu254.

The protein belongs to the tubulin family. In terms of assembly, dimer of alpha and beta chains. A typical microtubule is a hollow water-filled tube with an outer diameter of 25 nm and an inner diameter of 15 nM. Alpha-beta heterodimers associate head-to-tail to form protofilaments running lengthwise along the microtubule wall with the beta-tubulin subunit facing the microtubule plus end conferring a structural polarity. Microtubules usually have 13 protofilaments but different protofilament numbers can be found in some organisms and specialized cells. The cofactor is Mg(2+). Post-translationally, undergoes a tyrosination/detyrosination cycle, the cyclic removal and re-addition of a C-terminal tyrosine residue by the enzymes tubulin tyrosine carboxypeptidase (TTCP) and tubulin tyrosine ligase (TTL), respectively. Acetylation of alpha chains at Lys-40 stabilizes microtubules and affects affinity and processivity of microtubule motors. This modification has a role in multiple cellular functions, ranging from cell motility, cell cycle progression or cell differentiation to intracellular trafficking and signaling.

It localises to the cytoplasm. The protein localises to the cytoskeleton. It carries out the reaction GTP + H2O = GDP + phosphate + H(+). Tubulin is the major constituent of microtubules, a cylinder consisting of laterally associated linear protofilaments composed of alpha- and beta-tubulin heterodimers. Microtubules grow by the addition of GTP-tubulin dimers to the microtubule end, where a stabilizing cap forms. Below the cap, tubulin dimers are in GDP-bound state, owing to GTPase activity of alpha-tubulin. The protein is Tubulin alpha chain (TUBA) of Chlorella vulgaris (Green alga).